We begin with the raw amino-acid sequence, 141 residues long: Hemoglobin subunit alpha (141 aa).

The 141-residue stretch at 1 to 141 folds into the Globin domain; the sequence is VLSPADKTNV…VSTVLTSKYR (141 aa). S3 bears the Phosphoserine mark. N6-succinyllysine is present on K7. Position 8 is a phosphothreonine (T8). The residue at position 11 (K11) is an N6-succinyllysine. N6-acetyllysine; alternate is present on K16. The residue at position 16 (K16) is an N6-succinyllysine; alternate. Position 24 is a phosphotyrosine (Y24). Phosphoserine is present on S35. An N6-succinyllysine modification is found at K40. The residue at position 49 (S49) is a Phosphoserine. H58 contributes to the O2 binding site. Residue H87 coordinates heme b. S102 bears the Phosphoserine mark. A Phosphothreonine modification is found at T108. 2 positions are modified to phosphoserine: S124 and S131. T134 and T137 each carry phosphothreonine. S138 carries the post-translational modification Phosphoserine.

This sequence belongs to the globin family. In terms of assembly, heterotetramer of two alpha chains and two beta chains. In terms of tissue distribution, red blood cells.

Involved in oxygen transport from the lung to the various peripheral tissues. In terms of biological role, hemopressin acts as an antagonist peptide of the cannabinoid receptor CNR1. Hemopressin-binding efficiently blocks cannabinoid receptor CNR1 and subsequent signaling. The chain is Hemoglobin subunit alpha (HBA) from Gorilla gorilla gorilla (Western lowland gorilla).